The following is a 205-amino-acid chain: Isochorismatase domain-containing protein 2 (205 aa).

Ser-7 and Ser-202 each carry phosphoserine.

It belongs to the isochorismatase family. In terms of assembly, interacts with CDKN2A.

The protein resides in the cytoplasm. It localises to the nucleus. The protein is Isochorismatase domain-containing protein 2 (ISOC2) of Homo sapiens (Human).